The chain runs to 410 residues: Arginine deiminase (410 aa).

The active-site Amidino-cysteine intermediate is cysteine 400.

It belongs to the arginine deiminase family.

It is found in the cytoplasm. The catalysed reaction is L-arginine + H2O = L-citrulline + NH4(+). Its pathway is amino-acid degradation; L-arginine degradation via ADI pathway; carbamoyl phosphate from L-arginine: step 1/2. This is Arginine deiminase from Streptococcus uberis (strain ATCC BAA-854 / 0140J).